We begin with the raw amino-acid sequence, 86 residues long: Large ribosomal subunit protein bL27 (86 aa).

The segment at 1 to 22 (MATKKAGGSSRNGRDSAGRRLG) is disordered.

This sequence belongs to the bacterial ribosomal protein bL27 family.

This Rickettsia rickettsii (strain Iowa) protein is Large ribosomal subunit protein bL27.